The primary structure comprises 67 residues: ATP synthase F(0) complex subunit 8 (67 aa).

Residues 8 to 24 traverse the membrane as a helical segment; it reads TWFTVILSMIISLFMLL. Lysine 54 carries the post-translational modification N6-acetyllysine; alternate. Position 54 is an N6-succinyllysine; alternate (lysine 54). At lysine 57 the chain carries N6-acetyllysine.

It belongs to the ATPase protein 8 family. Component of the ATP synthase complex composed at least of ATP5F1A/subunit alpha, ATP5F1B/subunit beta, ATP5MC1/subunit c (homooctomer), MT-ATP6/subunit a, MT-ATP8/subunit 8, ATP5ME/subunit e, ATP5MF/subunit f, ATP5MG/subunit g, ATP5MK/subunit k, ATP5MJ/subunit j, ATP5F1C/subunit gamma, ATP5F1D/subunit delta, ATP5F1E/subunit epsilon, ATP5PF/subunit F6, ATP5PB/subunit b, ATP5PD/subunit d, ATP5PO/subunit OSCP. ATP synthase complex consists of a soluble F(1) head domain (subunits alpha(3) and beta(3)) - the catalytic core - and a membrane F(0) domain - the membrane proton channel (subunits c, a, 8, e, f, g, k and j). These two domains are linked by a central stalk (subunits gamma, delta, and epsilon) rotating inside the F1 region and a stationary peripheral stalk (subunits F6, b, d, and OSCP). Interacts with PRICKLE3.

The protein localises to the mitochondrion membrane. Functionally, subunit 8, of the mitochondrial membrane ATP synthase complex (F(1)F(0) ATP synthase or Complex V) that produces ATP from ADP in the presence of a proton gradient across the membrane which is generated by electron transport complexes of the respiratory chain. ATP synthase complex consist of a soluble F(1) head domain - the catalytic core - and a membrane F(1) domain - the membrane proton channel. These two domains are linked by a central stalk rotating inside the F(1) region and a stationary peripheral stalk. During catalysis, ATP synthesis in the catalytic domain of F(1) is coupled via a rotary mechanism of the central stalk subunits to proton translocation. In vivo, can only synthesize ATP although its ATP hydrolase activity can be activated artificially in vitro. Part of the complex F(0) domain. The protein is ATP synthase F(0) complex subunit 8 of Cavia porcellus (Guinea pig).